The primary structure comprises 438 residues: 26S proteasome regulatory subunit 7 homolog (438 aa).

Basic and acidic residues predominate over residues 1-15 (MPPKEDWEKYQKPVD). Residues 1-31 (MPPKEDWEKYQKPVDTEEENDKNPPPLDEGD) are disordered. At Ser90 the chain carries Phosphoserine. 220-227 (GPPGTGKT) contacts ATP.

The protein belongs to the AAA ATPase family.

The protein resides in the cytoplasm. It localises to the nucleus. Functionally, the 26S proteasome is involved in the ATP-dependent degradation of ubiquitinated proteins. The regulatory (or ATPase) complex confers ATP dependency and substrate specificity to the 26S complex. This chain is 26S proteasome regulatory subunit 7 homolog (rpt1), found in Schizosaccharomyces pombe (strain 972 / ATCC 24843) (Fission yeast).